Consider the following 153-residue polypeptide: Arachidonate 5-lipoxygenase-activating protein (153 aa).

At 1–8 (MDQEAVGN) the chain is on the lumenal side. Residues 9 to 30 (VVLLAIVTLISVVQNGFFAHKV) traverse the membrane as a helical segment. At 31–52 (EHESRNQNGRSFQRTGTLAFER) the chain is on the cytoplasmic side. Residues 53–77 (VYTANQNCVDAYPTFLAVLWTAGLL) traverse the membrane as a helical segment. At 78–80 (CSQ) the chain is on the lumenal side. Residues 81–102 (VPAAFAGLMYLFVRQKYFVGYL) traverse the membrane as a helical segment. At 103–107 (GERTQ) the chain is on the cytoplasmic side. An intramembrane segment occupies 108–115 (STPGYIFG). The chain crosses the membrane as a helical span at residues 116-128 (KRIILFLFLMSLA). The Lumenal segment spans residues 129–153 (GILNYCLILLFGSDFENYIKTISTT).

This sequence belongs to the MAPEG family. Homotrimer. Interacts with LTC4S and ALOX5.

The protein resides in the nucleus membrane. It is found in the endoplasmic reticulum membrane. In terms of biological role, required for leukotriene biosynthesis by ALOX5 (5-lipoxygenase). Anchors ALOX5 to the membrane. Binds arachidonic acid, and could play an essential role in the transfer of arachidonic acid to ALOX5. Binds to MK-886, a compound that blocks the biosynthesis of leukotrienes. This is Arachidonate 5-lipoxygenase-activating protein (ALOX5AP) from Oryctolagus cuniculus (Rabbit).